The chain runs to 367 residues: Alanine racemase (367 aa).

The Proton acceptor; specific for D-alanine role is filled by K35. K35 carries the post-translational modification N6-(pyridoxal phosphate)lysine. R130 contributes to the substrate binding site. Residue Y259 is the Proton acceptor; specific for L-alanine of the active site. M307 contributes to the substrate binding site.

The protein belongs to the alanine racemase family. Pyridoxal 5'-phosphate is required as a cofactor.

The enzyme catalyses L-alanine = D-alanine. Its pathway is amino-acid biosynthesis; D-alanine biosynthesis; D-alanine from L-alanine: step 1/1. Its function is as follows. Catalyzes the interconversion of L-alanine and D-alanine. May also act on other amino acids. The protein is Alanine racemase (alr) of Delftia acidovorans (strain DSM 14801 / SPH-1).